We begin with the raw amino-acid sequence, 233 residues long: Large ribosomal subunit protein uL1 (233 aa).

This sequence belongs to the universal ribosomal protein uL1 family. In terms of assembly, part of the 50S ribosomal subunit.

Its function is as follows. Binds directly to 23S rRNA. The L1 stalk is quite mobile in the ribosome, and is involved in E site tRNA release. In terms of biological role, protein L1 is also a translational repressor protein, it controls the translation of the L11 operon by binding to its mRNA. The sequence is that of Large ribosomal subunit protein uL1 from Buchnera aphidicola subsp. Baizongia pistaciae (strain Bp).